A 325-amino-acid polypeptide reads, in one-letter code: HTH-type transcriptional regulator VqsM (325 aa).

An HTH araC/xylS-type domain is found at 226-323 (QRIELFLDSI…GQSTTEFRNS (98 aa)). DNA-binding regions (H-T-H motif) lie at residues 243 to 264 (VTTA…ADEG) and 290 to 313 (VDRI…RRWT).

Functionally, transcriptional regulator involved in both the repression (at least 99 genes, such as mexR and algU) and in the activation (at least 203 genes, such as mvfR, rsaL, vqsR and rpoS) of regulatory or putative regulatory proteins which are implicated in quorum sensing, virulence and multidrug resistance. In Pseudomonas aeruginosa (strain ATCC 15692 / DSM 22644 / CIP 104116 / JCM 14847 / LMG 12228 / 1C / PRS 101 / PAO1), this protein is HTH-type transcriptional regulator VqsM (vqsM).